A 504-amino-acid polypeptide reads, in one-letter code: Galactose/methyl galactoside import ATP-binding protein MglA (504 aa).

ABC transporter domains follow at residues 8-247 and 258-504; these read LEMN…VGRD and TPGE…TRFI. 40 to 47 lines the ATP pocket; it reads GENGAGKS.

It belongs to the ABC transporter superfamily. Galactose/methyl galactoside importer (TC 3.A.1.2.3) family. The complex is composed of one ATP-binding protein (MglA), two transmembrane proteins (MglC) and a solute-binding protein (MglB).

It is found in the cell membrane. The catalysed reaction is D-galactose(out) + ATP + H2O = D-galactose(in) + ADP + phosphate + H(+). The enzyme catalyses methyl beta-D-galactoside(out) + ATP + H2O = methyl beta-D-galactoside(in) + ADP + phosphate + H(+). Its function is as follows. Part of the ABC transporter complex MglABC involved in galactose/methyl galactoside import. Responsible for energy coupling to the transport system. This Clostridium tetani (strain Massachusetts / E88) protein is Galactose/methyl galactoside import ATP-binding protein MglA.